Consider the following 1976-residue polypeptide: DNA-directed RNA polymerase V subunit 1 (1976 aa).

Cys-57, Cys-60, Cys-68, His-71, Cys-98, and Cys-101 together coordinate Zn(2+). The Mg(2+) site is built by Asp-449, Asp-451, and Asp-453. Residues 751–763 (PYEEMAHSIAARE) form a bridging helix region. Residues 1215–1216 (WG) form repeat 1. An 18 X 2 AA repeats of [WG]-[GW] repeats region spans residues 1215–1693 (WGKRVDVGTG…AKKFPSSGGW (479 aa)). Disordered regions lie at residues 1272–1291 (EEEM…LGEP), 1298–1718 (DFQN…EDNL), and 1847–1976 (FTKP…QTQT). Basic and acidic residues-rich tracts occupy residues 1281–1291 (SPERDSALGEP) and 1298–1307 (DFQNLHDEGK). Repeat unit 2 spans residues 1329-1330 (WG). The segment covering 1332–1348 (SKSTGGEANPESNWEKT) has biased composition (polar residues). Residues 1349–1371 (TNVEKEDAWSSWNTRKDAQESSK) are compositionally biased toward basic and acidic residues. 15 consecutive repeat copies span residues 1378–1379 (WG), 1415–1416 (WG), 1430–1431 (WG), 1439–1440 (WG), 1447–1448 (WG), 1464–1465 (WG), 1498–1499 (WG), 1528–1529 (WG), 1545–1546 (WG), 1562–1563 (WG), 1596–1597 (WG), 1604–1605 (WG), 1621–1622 (WG), 1638–1639 (WG), and 1641–1642 (WG). Basic and acidic residues predominate over residues 1415 to 1430 (WGHKSVSDKSWDKKNW). Residues 1491–1501 (TESNGATWGSS) are compositionally biased toward polar residues. Basic and acidic residues predominate over residues 1648-1678 (AEDKDTNEDDRNPWVSLKETKSREKDDKERS). A run of 2 repeats spans residues 1680-1681 (WG) and 1692-1693 (GW). A compositionally biased stretch (polar residues) spans 1869–1878 (EQSQPPNQSI). The span at 1886–1976 (QTQTQSQSPS…SSQSPSQTQT (91 aa)) shows a compositional bias: low complexity.

Belongs to the RNA polymerase beta' chain family. In terms of assembly, component of the RNA polymerase V complex. Interacts with NRPD4, NRPD2A, and (via C-terminus) with AGO4. Interacts with SUVH2. Mostly expressed in flowers, and, to a lower extent, in leaves. Present in sperm cells.

The protein localises to the nucleus. Its subcellular location is the nucleolus. The catalysed reaction is RNA(n) + a ribonucleoside 5'-triphosphate = RNA(n+1) + diphosphate. Functionally, DNA-dependent RNA polymerase catalyzes the transcription of DNA into RNA using the four ribonucleoside triphosphates as substrates. Largest and catalytic component of RNA polymerase V involved in RNA-directed DNA methylation-dependent (RdDM) silencing of endogenous repeated sequences, including transposable elements. Also required for full erasure of methylation when the RNA trigger is withdrawn. Seems also involved in the synthesis of short-interfering RNAs (siRNA). Essential component of a self-reinforcing loop coupling de novo DNA methylation to siRNA production. Involved in the maintenance of post-transcriptional RNA silencing. This Arabidopsis thaliana (Mouse-ear cress) protein is DNA-directed RNA polymerase V subunit 1 (NRPE1).